We begin with the raw amino-acid sequence, 359 residues long: N-acetyl-gamma-glutamyl-phosphate reductase (359 aa).

Cys162 is an active-site residue.

The protein belongs to the NAGSA dehydrogenase family. Type 1 subfamily.

Its subcellular location is the cytoplasm. The enzyme catalyses N-acetyl-L-glutamate 5-semialdehyde + phosphate + NADP(+) = N-acetyl-L-glutamyl 5-phosphate + NADPH + H(+). Its pathway is amino-acid biosynthesis; L-arginine biosynthesis; N(2)-acetyl-L-ornithine from L-glutamate: step 3/4. Its function is as follows. Catalyzes the NADPH-dependent reduction of N-acetyl-5-glutamyl phosphate to yield N-acetyl-L-glutamate 5-semialdehyde. The protein is N-acetyl-gamma-glutamyl-phosphate reductase of Prochlorococcus marinus (strain MIT 9211).